The chain runs to 100 residues: Small ribosomal subunit protein bS18c (100 aa).

This sequence belongs to the bacterial ribosomal protein bS18 family. In terms of assembly, part of the 30S ribosomal subunit.

The protein resides in the plastid. It is found in the chloroplast. The polypeptide is Small ribosomal subunit protein bS18c (Pleurastrum terricola (Filamentous green alga)).